Reading from the N-terminus, the 521-residue chain is Glucose-1-phosphate adenylyltransferase small subunit, chloroplastic (521 aa).

Positions 1–24 are disordered; the sequence is MAASIGALKSSPSSHNCINERRND. A chloroplast-targeting transit peptide spans 1 to 72; the sequence is MAASIGALKS…RSPLIVSPKA (72 aa).

The protein belongs to the bacterial/plant glucose-1-phosphate adenylyltransferase family. As to quaternary structure, heterotetramer.

It localises to the plastid. The protein localises to the chloroplast. The enzyme catalyses alpha-D-glucose 1-phosphate + ATP + H(+) = ADP-alpha-D-glucose + diphosphate. It functions in the pathway glycan biosynthesis; starch biosynthesis. Activated by 3'phosphoglycerate, inhibited by orthophosphate. Allosteric regulation. In terms of biological role, this protein plays a role in synthesis of starch. It catalyzes the synthesis of the activated glycosyl donor, ADP-glucose from Glc-1-P and ATP. This is Glucose-1-phosphate adenylyltransferase small subunit, chloroplastic from Solanum lycopersicum (Tomato).